A 600-amino-acid polypeptide reads, in one-letter code: 1-deoxy-D-xylulose-5-phosphate synthase (600 aa).

Thiamine diphosphate contacts are provided by residues H57 and 98–100 (GHA). D125 is a binding site for Mg(2+). Residues 126-127 (AS), N155, Y264, and E343 contribute to the thiamine diphosphate site. Position 155 (N155) interacts with Mg(2+).

This sequence belongs to the transketolase family. DXPS subfamily. In terms of assembly, homodimer. Mg(2+) serves as cofactor. It depends on thiamine diphosphate as a cofactor.

The enzyme catalyses D-glyceraldehyde 3-phosphate + pyruvate + H(+) = 1-deoxy-D-xylulose 5-phosphate + CO2. Its pathway is metabolic intermediate biosynthesis; 1-deoxy-D-xylulose 5-phosphate biosynthesis; 1-deoxy-D-xylulose 5-phosphate from D-glyceraldehyde 3-phosphate and pyruvate: step 1/1. Functionally, catalyzes the acyloin condensation reaction between C atoms 2 and 3 of pyruvate and glyceraldehyde 3-phosphate to yield 1-deoxy-D-xylulose-5-phosphate (DXP). This is 1-deoxy-D-xylulose-5-phosphate synthase from Fusobacterium nucleatum subsp. nucleatum (strain ATCC 25586 / DSM 15643 / BCRC 10681 / CIP 101130 / JCM 8532 / KCTC 2640 / LMG 13131 / VPI 4355).